The sequence spans 481 residues: Aspartyl/glutamyl-tRNA(Asn/Gln) amidotransferase subunit B (481 aa).

This sequence belongs to the GatB/GatE family. GatB subfamily. As to quaternary structure, heterotrimer of A, B and C subunits.

It carries out the reaction L-glutamyl-tRNA(Gln) + L-glutamine + ATP + H2O = L-glutaminyl-tRNA(Gln) + L-glutamate + ADP + phosphate + H(+). The catalysed reaction is L-aspartyl-tRNA(Asn) + L-glutamine + ATP + H2O = L-asparaginyl-tRNA(Asn) + L-glutamate + ADP + phosphate + 2 H(+). Functionally, allows the formation of correctly charged Asn-tRNA(Asn) or Gln-tRNA(Gln) through the transamidation of misacylated Asp-tRNA(Asn) or Glu-tRNA(Gln) in organisms which lack either or both of asparaginyl-tRNA or glutaminyl-tRNA synthetases. The reaction takes place in the presence of glutamine and ATP through an activated phospho-Asp-tRNA(Asn) or phospho-Glu-tRNA(Gln). This chain is Aspartyl/glutamyl-tRNA(Asn/Gln) amidotransferase subunit B, found in Prosthecochloris aestuarii (strain DSM 271 / SK 413).